Reading from the N-terminus, the 386-residue chain is Enoyl-[acyl-carrier-protein] reductase 1, mitochondrial (386 aa).

The transit peptide at 1-22 (MYSVLKQSIRPRLLATHNQFRT) directs the protein to the mitochondrion. Tyrosine 79 acts as the Proton donor in catalysis. NADP(+)-binding positions include asparagine 172, 199 to 202 (TSAV), 222 to 224 (RDR), 296 to 299 (YGGM), 321 to 323 (FWV), and lysine 381.

Belongs to the zinc-containing alcohol dehydrogenase family. Quinone oxidoreductase subfamily. As to quaternary structure, homodimer and heterodimer with ETR2.

Its subcellular location is the mitochondrion. It catalyses the reaction a 2,3-saturated acyl-[ACP] + NADP(+) = a (2E)-enoyl-[ACP] + NADPH + H(+). The catalysed reaction is (2E,4E)-hexadienoyl-CoA + NADPH + H(+) = (4E)-hexenoyl-CoA + NADP(+). It carries out the reaction (2E)-hexenoyl-CoA + NADPH + H(+) = hexanoyl-CoA + NADP(+). Functionally, catalyzes the NADPH-dependent reduction of trans-2-enoyl thioesters in mitochondrial fatty acid synthesis (fatty acid synthesis type II). Fatty acid chain elongation in mitochondria uses acyl carrier protein (ACP) as an acyl group carrier, but the enzyme accepts both ACP and CoA thioesters as substrates in vitro. Required for respiration and the maintenance of the mitochondrial compartment. The protein is Enoyl-[acyl-carrier-protein] reductase 1, mitochondrial (ETR1) of Candida tropicalis (Yeast).